The primary structure comprises 278 residues: Pyrroline-5-carboxylate reductase 2 (278 aa).

It belongs to the pyrroline-5-carboxylate reductase family.

The protein localises to the cytoplasm. It catalyses the reaction L-proline + NADP(+) = (S)-1-pyrroline-5-carboxylate + NADPH + 2 H(+). It carries out the reaction L-proline + NAD(+) = (S)-1-pyrroline-5-carboxylate + NADH + 2 H(+). Its pathway is amino-acid biosynthesis; L-proline biosynthesis; L-proline from L-glutamate 5-semialdehyde: step 1/1. Catalyzes the reduction of 1-pyrroline-5-carboxylate (PCA) to L-proline. This Bacillus subtilis (strain 168) protein is Pyrroline-5-carboxylate reductase 2 (proI).